Consider the following 423-residue polypeptide: F-box/LRR-repeat protein 2 (423 aa).

Positions 9-55 constitute an F-box domain; the sequence is GLINKKLPKELLLRIFSFLDIVTLCRCAQISKAWNILALDGSNWQRV. LRR repeat units follow at residues 61–87, 88–113, 114–139, 140–165, 166–191, 192–217, 218–243, 244–269, 270–295, 296–321, 322–350, 351–375, and 376–401; these read QTDV…SLRG, CIGV…NLNG, CTKI…DLTS, CVSV…NLSW, CDQI…LLRG, CTQL…NLQS, CSRI…CLSG, CSNL…EAAR, CSHL…DLEE, CVLI…SLSH, CELI…ELDN, CLLV…ELYD, and CQQV…AYFA. The interval 80–90 is interaction with Calmodulin; it reads LRKLSLRGCIG. Residue Lys-201 forms a Glycyl lysine isopeptide (Lys-Gly) (interchain with G-Cter in ubiquitin) linkage. Thr-404 is subject to Phosphothreonine; by GSK3-beta. Cys-420 is lipidated: S-geranylgeranyl cysteine. Residues 420–423 carry the CAAX motif motif; sequence CVIL.

In terms of assembly, part of the SCF (SKP1-CUL1-F-box) E3 ubiquitin-protein ligase complex SCF(FBXL2) composed of CUL1, SKP1, RBX1 and FBXL2. Interacts with calmodulin; may antagonize substrate ubiquitination by SCF(FBXL2). May interact with PIK3R1. Interacts with PTPN13. In terms of processing, phosphorylated by GSK-beta (GSK3B), promoting recognition by FBXO3, leading to its ubiquitination by the SCF(FBXO3) complex. Post-translationally, ubiquitinated at Lys-201 by the SCF(FBXO3) complex in response to lipopolysaccharide (LPS), leading to its degradation by the proteasome.

It localises to the membrane. It participates in protein modification; protein ubiquitination. Its function is as follows. Calcium-activated substrate recognition component of the SCF (SKP1-cullin-F-box protein) E3 ubiquitin-protein ligase complex, SCF(FBXL2), which mediates the ubiquitination and subsequent proteasomal degradation of target proteins. Unlike many F-box proteins, FBXL2 does not seem to target phosphodegron within its substrates but rather calmodulin-binding motifs and is thereby antagonized by calmodulin. This is the case for the cyclins CCND2 and CCND3 which polyubiquitination and subsequent degradation are inhibited by calmodulin. Through CCND2 and CCND3 degradation induces cell-cycle arrest in G(0). SCF(FBXL2) also mediates PIK3R2 ubiquitination and proteasomal degradation thereby regulating phosphatidylinositol 3-kinase signaling and autophagy. PCYT1A monoubiquitination by SCF(FBXL2) and subsequent degradation regulates synthesis of phosphatidylcholine, which is utilized for formation of membranes and of pulmonary surfactant. The SCF(FBXL2) complex acts as a regulator of inflammation by mediating ubiquitination and degradation of TRAF proteins (TRAF1, TRAF2, TRAF3, TRAF4, TRAF5 and TRAF6). The SCF(FBXL2) complex acts as a negative regulator of the NLRP3 inflammasome by mediating ubiquitination and degradation of NLRP3. In Mus musculus (Mouse), this protein is F-box/LRR-repeat protein 2.